We begin with the raw amino-acid sequence, 494 residues long: Amidophosphoribosyltransferase (494 aa).

Residues 1–10 constitute a propeptide that is removed on maturation; it reads MFNYSGLNEE. The Nucleophile role is filled by C11. The Glutamine amidotransferase type-2 domain occupies 11–231; that stretch reads CGVFGIWNHP…AGEYVVINDK (221 aa). 3 residues coordinate Mg(2+): S294, D356, and D357.

The protein in the C-terminal section; belongs to the purine/pyrimidine phosphoribosyltransferase family. It depends on Mg(2+) as a cofactor.

The catalysed reaction is 5-phospho-beta-D-ribosylamine + L-glutamate + diphosphate = 5-phospho-alpha-D-ribose 1-diphosphate + L-glutamine + H2O. It participates in purine metabolism; IMP biosynthesis via de novo pathway; N(1)-(5-phospho-D-ribosyl)glycinamide from 5-phospho-alpha-D-ribose 1-diphosphate: step 1/2. In terms of biological role, catalyzes the formation of phosphoribosylamine from phosphoribosylpyrophosphate (PRPP) and glutamine. The protein is Amidophosphoribosyltransferase of Staphylococcus aureus (strain COL).